Here is a 331-residue protein sequence, read N- to C-terminus: Fructose-1,6-bisphosphatase class 1 (331 aa).

Residues glutamate 100, aspartate 120, leucine 122, and aspartate 123 each coordinate Mg(2+). Residues 123–126, asparagine 216, tyrosine 243, 261–263, and lysine 273 contribute to the substrate site; these read DGSS and YLY. Residue glutamate 279 coordinates Mg(2+).

It belongs to the FBPase class 1 family. Homotetramer. Requires Mg(2+) as cofactor.

The protein localises to the cytoplasm. The enzyme catalyses beta-D-fructose 1,6-bisphosphate + H2O = beta-D-fructose 6-phosphate + phosphate. The protein operates within carbohydrate biosynthesis; gluconeogenesis. The protein is Fructose-1,6-bisphosphatase class 1 of Amoebophilus asiaticus (strain 5a2).